The primary structure comprises 186 residues: UPF0301 protein Sfri_2850 (186 aa).

It belongs to the UPF0301 (AlgH) family.

The chain is UPF0301 protein Sfri_2850 from Shewanella frigidimarina (strain NCIMB 400).